A 565-amino-acid polypeptide reads, in one-letter code: CTP synthase (565 aa).

The amidoligase domain stretch occupies residues 1–272; the sequence is MARPKNVKHI…DKRVLKKLGI (272 aa). CTP is bound at residue Ser18. Ser18 contributes to the UTP binding site. 19-24 serves as a coordination point for ATP; that stretch reads SLGKGI. Position 59 (Tyr59) interacts with L-glutamine. Asp76 serves as a coordination point for ATP. The Mg(2+) site is built by Asp76 and Glu146. CTP contacts are provided by residues 153–155, 193–198, and Lys229; these read DIE and KTKPTQ. Residues 193–198 and Lys229 contribute to the UTP site; that span reads KTKPTQ. One can recognise a Glutamine amidotransferase type-1 domain in the interval 299–543; sequence TIAVCGKYTE…VAAAKAFAFG (245 aa). Residue Gly363 coordinates L-glutamine. Cys390 (nucleophile; for glutamine hydrolysis) is an active-site residue. L-glutamine contacts are provided by residues 391–394, Glu414, and Arg471; that span reads LGMQ. Active-site residues include His516 and Glu518.

Belongs to the CTP synthase family. Homotetramer.

The enzyme catalyses UTP + L-glutamine + ATP + H2O = CTP + L-glutamate + ADP + phosphate + 2 H(+). The catalysed reaction is L-glutamine + H2O = L-glutamate + NH4(+). It catalyses the reaction UTP + NH4(+) + ATP = CTP + ADP + phosphate + 2 H(+). It functions in the pathway pyrimidine metabolism; CTP biosynthesis via de novo pathway; CTP from UDP: step 2/2. Allosterically activated by GTP, when glutamine is the substrate; GTP has no effect on the reaction when ammonia is the substrate. The allosteric effector GTP functions by stabilizing the protein conformation that binds the tetrahedral intermediate(s) formed during glutamine hydrolysis. Inhibited by the product CTP, via allosteric rather than competitive inhibition. Its function is as follows. Catalyzes the ATP-dependent amination of UTP to CTP with either L-glutamine or ammonia as the source of nitrogen. Regulates intracellular CTP levels through interactions with the four ribonucleotide triphosphates. This Chlorobium phaeobacteroides (strain BS1) protein is CTP synthase.